A 412-amino-acid polypeptide reads, in one-letter code: Tyrosine--tRNA ligase (412 aa).

Residue Tyr31 coordinates L-tyrosine. The short motif at 36–45 is the 'HIGH' region element; it reads PTAASLHIGH. The L-tyrosine site is built by Tyr162 and Gln166. The short motif at 222–226 is the 'KMSKS' region element; that stretch reads KIGKT. Residue Lys225 coordinates ATP. One can recognise an S4 RNA-binding domain in the interval 345–412; it reads KRWIDLFVGV…KKKKLVLHLI (68 aa).

It belongs to the class-I aminoacyl-tRNA synthetase family. TyrS type 1 subfamily. In terms of assembly, homodimer.

It is found in the cytoplasm. The enzyme catalyses tRNA(Tyr) + L-tyrosine + ATP = L-tyrosyl-tRNA(Tyr) + AMP + diphosphate + H(+). In terms of biological role, catalyzes the attachment of tyrosine to tRNA(Tyr) in a two-step reaction: tyrosine is first activated by ATP to form Tyr-AMP and then transferred to the acceptor end of tRNA(Tyr). This is Tyrosine--tRNA ligase from Chlamydia caviae (strain ATCC VR-813 / DSM 19441 / 03DC25 / GPIC) (Chlamydophila caviae).